Consider the following 246-residue polypeptide: Probable transcriptional regulatory protein Rmag_0394 (246 aa).

Belongs to the TACO1 family.

It is found in the cytoplasm. This is Probable transcriptional regulatory protein Rmag_0394 from Ruthia magnifica subsp. Calyptogena magnifica.